A 195-amino-acid chain; its full sequence is Imidazole glycerol phosphate synthase subunit HisH (195 aa).

Residues 1-193 form the Glutamine amidotransferase type-1 domain; that stretch reads MIAIVDYGVG…RETTCNSTQQ (193 aa). Cys-78 (nucleophile) is an active-site residue. Catalysis depends on residues His-168 and Glu-170.

Heterodimer of HisH and HisF.

It is found in the cytoplasm. It catalyses the reaction 5-[(5-phospho-1-deoxy-D-ribulos-1-ylimino)methylamino]-1-(5-phospho-beta-D-ribosyl)imidazole-4-carboxamide + L-glutamine = D-erythro-1-(imidazol-4-yl)glycerol 3-phosphate + 5-amino-1-(5-phospho-beta-D-ribosyl)imidazole-4-carboxamide + L-glutamate + H(+). It carries out the reaction L-glutamine + H2O = L-glutamate + NH4(+). It participates in amino-acid biosynthesis; L-histidine biosynthesis; L-histidine from 5-phospho-alpha-D-ribose 1-diphosphate: step 5/9. Its function is as follows. IGPS catalyzes the conversion of PRFAR and glutamine to IGP, AICAR and glutamate. The HisH subunit catalyzes the hydrolysis of glutamine to glutamate and ammonia as part of the synthesis of IGP and AICAR. The resulting ammonia molecule is channeled to the active site of HisF. This chain is Imidazole glycerol phosphate synthase subunit HisH, found in Exiguobacterium sibiricum (strain DSM 17290 / CCUG 55495 / CIP 109462 / JCM 13490 / 255-15).